The sequence spans 125 residues: Snaclec coagulation factor IX/factor X-binding protein subunit B (125 aa).

Positions 1–122 (DCSSGWTAYG…SLFGHFVCKS (122 aa)) constitute a C-type lectin domain. Cystine bridges form between cysteine 2–cysteine 13, cysteine 30–cysteine 120, and cysteine 97–cysteine 112. The Ca(2+) site is built by serine 41 and glutamate 47.

The protein belongs to the snaclec family. Heterodimer of subunits A and B; disulfide-linked. In terms of tissue distribution, expressed by the venom gland.

The protein localises to the secreted. In terms of biological role, anticoagulant protein which binds to coagulation factor IX (F9) and coagulation factor X (F10) in the presence of calcium. It may bind the gamma-carboxyglutamic acid-domain regions of factors with a 1 to 1 stoichiometry. The dissociation constant (K(d)) are 6.6 nM for factor IX (F9) and 125 nM for factor X (F10). Does not bind carbohydrates. The protein is Snaclec coagulation factor IX/factor X-binding protein subunit B of Echis carinatus (Saw-scaled viper).